A 376-amino-acid chain; its full sequence is Succinate--CoA ligase [ADP-forming] subunit beta (376 aa).

In terms of domain architecture, ATP-grasp spans 9–234 (KAIAKKYGIP…ERELSELEKE (226 aa)). ATP-binding positions include K45, 52–54 (GRG), E91, E94, and E99. The Mg(2+) site is built by N191 and D204. Substrate contacts are provided by residues N254 and 311–313 (GIT).

Belongs to the succinate/malate CoA ligase beta subunit family. Heterotetramer of two alpha and two beta subunits. Mg(2+) serves as cofactor.

The enzyme catalyses succinate + ATP + CoA = succinyl-CoA + ADP + phosphate. The catalysed reaction is GTP + succinate + CoA = succinyl-CoA + GDP + phosphate. It functions in the pathway carbohydrate metabolism; tricarboxylic acid cycle; succinate from succinyl-CoA (ligase route): step 1/1. Its function is as follows. Succinyl-CoA synthetase functions in the citric acid cycle (TCA), coupling the hydrolysis of succinyl-CoA to the synthesis of either ATP or GTP and thus represents the only step of substrate-level phosphorylation in the TCA. The beta subunit provides nucleotide specificity of the enzyme and binds the substrate succinate, while the binding sites for coenzyme A and phosphate are found in the alpha subunit. This chain is Succinate--CoA ligase [ADP-forming] subunit beta, found in Ignicoccus hospitalis (strain KIN4/I / DSM 18386 / JCM 14125).